The following is an 868-amino-acid chain: Leucine-rich repeat receptor-like serine/threonine-protein kinase At2g14510 (868 aa).

The signal sequence occupies residues 1-23; the sequence is METRNKFMLLACATFSIMSLVKS. Residues 24–510 lie on the Extracellular side of the membrane; it reads QNQQGFISLD…KHQPKSWLVA (487 aa). Asn48, Asn68, Asn231, Asn235, Asn258, Asn291, Asn433, and Asn446 each carry an N-linked (GlcNAc...) asparagine glycan. LRR repeat units follow at residues 412-435, 436-458, and 460-482; these read RIISLDLSLSGLTGVISPSIQNLT, MLRELDLSNNNLTGEVPEFLATI, and PLLVIHLRGNNLRGSVPQALQDR. An N-linked (GlcNAc...) asparagine glycan is attached at Asn495. Residues 511 to 531 traverse the membrane as a helical segment; the sequence is IVASISCVAVTIIVLVLIFIF. Over 532-868 the chain is Cytoplasmic; sequence RRRKSSTRKV…TFISDIPSAR (337 aa). One can recognise a Protein kinase domain in the interval 563 to 832; sequence NNFEVVLGKG…NMTRVAHELN (270 aa). Residues 569 to 577 and Lys590 each bind ATP; that span reads LGKGGFGVV. Tyr635 carries the phosphotyrosine modification. The active-site Proton acceptor is the Asp687. The residue at position 721 (Ser721) is a Phosphoserine. 2 positions are modified to phosphothreonine: Thr722 and Thr727. Tyr735 is modified (phosphotyrosine).

It belongs to the protein kinase superfamily. Ser/Thr protein kinase family.

The protein localises to the cell membrane. It carries out the reaction L-seryl-[protein] + ATP = O-phospho-L-seryl-[protein] + ADP + H(+). The catalysed reaction is L-threonyl-[protein] + ATP = O-phospho-L-threonyl-[protein] + ADP + H(+). The protein is Leucine-rich repeat receptor-like serine/threonine-protein kinase At2g14510 of Arabidopsis thaliana (Mouse-ear cress).